We begin with the raw amino-acid sequence, 127 residues long: Large ribosomal subunit protein bL17 (127 aa).

Belongs to the bacterial ribosomal protein bL17 family. As to quaternary structure, part of the 50S ribosomal subunit. Contacts protein L32.

The protein is Large ribosomal subunit protein bL17 of Pelobacter propionicus (strain DSM 2379 / NBRC 103807 / OttBd1).